The primary structure comprises 398 residues: MSNSKRTAAIIVAGGRGLRAGAGGPKQYRSLAGQPVIFRAMQPFCTHAEIFAVQPVTSPDDAEMFKLAVAGLNYQPPAPGGATRQGSVRAGLEALAADAPDIVLIHDAARPFVDAALISRAIVAAQITGAAVPTIAVTDTIKQINAQGDVVATPDRARLRIAQTPQAFRFDVILEAHRRAAREGRDDFTDDAAIAEWAGLTVATFEGDVANMKLTTPEDFVREESRLGALLGDIRTGTGYDVHAFGDGDHVWLCGLKVPHNRGFLAHSDGDVGLHALVDAILGALADGDIGSHFPPTDPQWKGAASDKFLKYAVDRVTARGGRIANLEVTMICERPKIGPLREPMRQRIAEITGLPVARIAVKATTSERLGFTGREEGIAATASATLRLPWGTNGLAD.

The interval 1 to 234 (MSNSKRTAAI…SRLGALLGDI (234 aa)) is 2-C-methyl-D-erythritol 4-phosphate cytidylyltransferase. A 2-C-methyl-D-erythritol 2,4-cyclodiphosphate synthase region spans residues 235–398 (RTGTGYDVHA…LPWGTNGLAD (164 aa)). Residues Asp241 and His243 each contribute to the a divalent metal cation site. 4-CDP-2-C-methyl-D-erythritol 2-phosphate is bound by residues 241–243 (DVH) and 267–268 (HS). An a divalent metal cation-binding site is contributed by His275. 4-CDP-2-C-methyl-D-erythritol 2-phosphate contacts are provided by residues 289 to 291 (DIG), 365 to 368 (TTSE), Phe372, and Arg375.

In the N-terminal section; belongs to the IspD/TarI cytidylyltransferase family. IspD subfamily. The protein in the C-terminal section; belongs to the IspF family. A divalent metal cation serves as cofactor.

It carries out the reaction 2-C-methyl-D-erythritol 4-phosphate + CTP + H(+) = 4-CDP-2-C-methyl-D-erythritol + diphosphate. The catalysed reaction is 4-CDP-2-C-methyl-D-erythritol 2-phosphate = 2-C-methyl-D-erythritol 2,4-cyclic diphosphate + CMP. It participates in isoprenoid biosynthesis; isopentenyl diphosphate biosynthesis via DXP pathway; isopentenyl diphosphate from 1-deoxy-D-xylulose 5-phosphate: step 2/6. It functions in the pathway isoprenoid biosynthesis; isopentenyl diphosphate biosynthesis via DXP pathway; isopentenyl diphosphate from 1-deoxy-D-xylulose 5-phosphate: step 4/6. In terms of biological role, bifunctional enzyme that catalyzes the formation of 4-diphosphocytidyl-2-C-methyl-D-erythritol from CTP and 2-C-methyl-D-erythritol 4-phosphate (MEP) (IspD), and catalyzes the conversion of 4-diphosphocytidyl-2-C-methyl-D-erythritol 2-phosphate (CDP-ME2P) to 2-C-methyl-D-erythritol 2,4-cyclodiphosphate (ME-CPP) with a corresponding release of cytidine 5-monophosphate (CMP) (IspF). This chain is Bifunctional enzyme IspD/IspF, found in Rhodopseudomonas palustris (strain BisB18).